The following is a 218-amino-acid chain: Orotate phosphoribosyltransferase (218 aa).

Lysine 26 serves as a coordination point for 5-phospho-alpha-D-ribose 1-diphosphate. 34–35 (FF) contacts orotate. 5-phospho-alpha-D-ribose 1-diphosphate contacts are provided by residues 72-73 (YK), arginine 99, lysine 100, lysine 103, histidine 105, and 124-132 (DDVITAGTA). Residues threonine 128 and arginine 156 each coordinate orotate.

Belongs to the purine/pyrimidine phosphoribosyltransferase family. PyrE subfamily. In terms of assembly, homodimer. Mg(2+) is required as a cofactor.

The enzyme catalyses orotidine 5'-phosphate + diphosphate = orotate + 5-phospho-alpha-D-ribose 1-diphosphate. Its pathway is pyrimidine metabolism; UMP biosynthesis via de novo pathway; UMP from orotate: step 1/2. Catalyzes the transfer of a ribosyl phosphate group from 5-phosphoribose 1-diphosphate to orotate, leading to the formation of orotidine monophosphate (OMP). The sequence is that of Orotate phosphoribosyltransferase from Hamiltonella defensa subsp. Acyrthosiphon pisum (strain 5AT).